We begin with the raw amino-acid sequence, 75 residues long: Protein myomixer (75 aa).

Residues 1–5 (MPAVF) lie on the Cytoplasmic side of the membrane. Residues 6-28 (LLLRSLVVRLFGSRLAASGVQLL) traverse the membrane as a helical segment. The Extracellular portion of the chain corresponds to 29 to 75 (RRILTTATGHLGTVLRNIWERISSQQSKEAILGCVLCLLNMHKKVDN). The AxLyCxL motif lies at 58 to 67 (AILGCVLCLL).

It belongs to the MYMX family. Specifically expressed in the developing myotome.

It is found in the cell membrane. Its function is as follows. Myoblast-specific protein that mediates myoblast fusion, an essential step for the formation of multi-nucleated muscle fibers. Involved in membrane fusion downstream of the lipid mixing step mediated by mymk. Acts by generating membrane stresses via its extracellular C-terminus, leading to drive fusion pore formation. The chain is Protein myomixer from Danio rerio (Zebrafish).